The chain runs to 379 residues: Queuine tRNA-ribosyltransferase (379 aa).

The active-site Proton acceptor is the D94. Residues 94-98 (DSGGF), D148, Q191, and G218 each bind substrate. The RNA binding stretch occupies residues 249–255 (GVGSPDS). The active-site Nucleophile is D268. Positions 273–277 (TRIAR) are RNA binding; important for wobble base 34 recognition. Residues C306, C308, C311, and H337 each contribute to the Zn(2+) site.

Belongs to the queuine tRNA-ribosyltransferase family. In terms of assembly, homodimer. Within each dimer, one monomer is responsible for RNA recognition and catalysis, while the other monomer binds to the replacement base PreQ1. The cofactor is Zn(2+).

The enzyme catalyses 7-aminomethyl-7-carbaguanine + guanosine(34) in tRNA = 7-aminomethyl-7-carbaguanosine(34) in tRNA + guanine. It participates in tRNA modification; tRNA-queuosine biosynthesis. Its function is as follows. Catalyzes the base-exchange of a guanine (G) residue with the queuine precursor 7-aminomethyl-7-deazaguanine (PreQ1) at position 34 (anticodon wobble position) in tRNAs with GU(N) anticodons (tRNA-Asp, -Asn, -His and -Tyr). Catalysis occurs through a double-displacement mechanism. The nucleophile active site attacks the C1' of nucleotide 34 to detach the guanine base from the RNA, forming a covalent enzyme-RNA intermediate. The proton acceptor active site deprotonates the incoming PreQ1, allowing a nucleophilic attack on the C1' of the ribose to form the product. After dissociation, two additional enzymatic reactions on the tRNA convert PreQ1 to queuine (Q), resulting in the hypermodified nucleoside queuosine (7-(((4,5-cis-dihydroxy-2-cyclopenten-1-yl)amino)methyl)-7-deazaguanosine). The protein is Queuine tRNA-ribosyltransferase of Listeria innocua serovar 6a (strain ATCC BAA-680 / CLIP 11262).